The sequence spans 575 residues: Sodium/hydrogen exchanger 8 (575 aa).

The next 11 membrane-spanning stretches (helical) occupy residues 54–74 (MTIFFSLLVLAICIILVHLLI), 78–98 (LHFLPESVAVVSLGILMGAVI), 117–137 (PNMFFLLLLPPIIFESGYSLH), 150–170 (LFAVFGTAISAFVVGGGIYFL), 185–205 (FAFGSLISAVDPVATIAIFNA), 255–275 (LGYFLKMFFGSAALGTLTGLI), 305–325 (GLAEGISLSGIMAILFSGIVM), 348–368 (VAFLCETCVFAFLGLSIFSFP), 373–393 (ISFVIWCIVLVLFGRAVNIFP), 411–431 (MFIMWFSGLRGAIPYALSLHL), and 445–465 (TTIIIVLFTILLLGGSTMPLI). Thr504 is modified (phosphothreonine). Residues Ser565 and Ser567 each carry the phosphoserine modification.

It belongs to the monovalent cation:proton antiporter 1 (CPA1) transporter (TC 2.A.36) family. As to expression, intestine and kidneys.

Its subcellular location is the golgi apparatus membrane. The protein localises to the golgi apparatus. It localises to the trans-Golgi network membrane. The protein resides in the endosome. It is found in the multivesicular body membrane. Its subcellular location is the apical cell membrane. The protein localises to the cytoplasmic vesicle. It localises to the secretory vesicle. The protein resides in the acrosome. The enzyme catalyses Na(+)(in) + H(+)(out) = Na(+)(out) + H(+)(in). With respect to regulation, expression and activity are regulated by acid media by increasing the rate of trafficking to the apical membrane. Inhibited by HOE694 and S3226. In terms of biological role, na(+)/H(+) antiporter. Mediates the electoneutral exchange of intracellular H(+) ions for extracellular Na(+) in 1:1 stoichiometry. Acts as an Na(+)/H(+) exchanger in the trans-Golgi. Contributes to the regulation of pH regulation of Golgi apparatus, and consequently, in protein trafficking and endosomal morphology. In germ cells, plays a crucial role in acrosome biogenesis and sperm development, probably by playing a role in the fusion of the Golgi-derived vesicles that form the acrosomal cap. Can also be active at the cell surface of specialized cells. In the small intestine, at the cell membrane, plays a major physiological role in transepithelial absorption of Na(+) and regulates intracellular pH homeostasis of intestinal epithelial cells. Acts as an important regulator of mucosal integrity in the intestine and in the stomach, could mediate the pH fluctuation necessary for mucin exocytosis or assist membrane trafficking of other proteins. Plays a role in photoreceptor survival and in the maintenance of intracellular pH homeostasis in retinal pigment epithelium (RPE cells). This Rattus norvegicus (Rat) protein is Sodium/hydrogen exchanger 8 (Slc9a8).